A 202-amino-acid polypeptide reads, in one-letter code: MKEYNIVITGVGGQGILTAANLLGWAALKAGYKVRVGEVHGMSQRFGSVIAYVRFGDDVYGAMVPEGKADVILSFEPVEALRYINYLKKGGLVFTNARPIPPVQVSMGLATYPSLEEIKRIVEEEFNGKFLAFDAEKLAIEAGNVITTNVVLIGALTQTPGFPLSAEHVKEVIRLSVPPKAVDVNMKAFDLGVKAAKEMLNL.

Heterodimer of the IorA and IorB subunits.

The catalysed reaction is indole-3-pyruvate + 2 oxidized [2Fe-2S]-[ferredoxin] + CoA = (indol-3-yl)acetyl-CoA + 2 reduced [2Fe-2S]-[ferredoxin] + CO2 + H(+). Catalyzes the ferredoxin-dependent oxidative decarboxylation of arylpyruvates. This Pyrococcus horikoshii (strain ATCC 700860 / DSM 12428 / JCM 9974 / NBRC 100139 / OT-3) protein is Indolepyruvate oxidoreductase subunit IorB (iorB).